The following is a 436-amino-acid chain: Adenylosuccinate synthetase (436 aa).

Residues 12–18 (GDEGKGK) and 40–42 (GHT) each bind GTP. Asp13 functions as the Proton acceptor in the catalytic mechanism. Mg(2+)-binding residues include Asp13 and Gly40. Residues 13 to 16 (DEGK), 38 to 41 (NAGH), Thr128, Arg142, Gln223, Thr238, and Arg302 each bind IMP. His41 serves as the catalytic Proton donor. Residue 298–304 (TTTGRRR) coordinates substrate. GTP is bound by residues Arg304, 330-332 (KLD), and 412-414 (SLG).

Belongs to the adenylosuccinate synthetase family. In terms of assembly, homodimer. Mg(2+) serves as cofactor.

It is found in the cytoplasm. It carries out the reaction IMP + L-aspartate + GTP = N(6)-(1,2-dicarboxyethyl)-AMP + GDP + phosphate + 2 H(+). It functions in the pathway purine metabolism; AMP biosynthesis via de novo pathway; AMP from IMP: step 1/2. Plays an important role in the de novo pathway of purine nucleotide biosynthesis. Catalyzes the first committed step in the biosynthesis of AMP from IMP. The sequence is that of Adenylosuccinate synthetase from Prochlorococcus marinus subsp. pastoris (strain CCMP1986 / NIES-2087 / MED4).